A 1476-amino-acid chain; its full sequence is ABC-type transporter frbG (1476 aa).

A run of 5 helical transmembrane segments spans residues 26 to 46, 64 to 84, 97 to 117, 122 to 142, and 146 to 166; these read LLFE…VLAL, LYYA…VQLI, SIAI…LCHL, SAKP…FDII, and TLWI…GLVL. Asn244 is a glycosylation site (N-linked (GlcNAc...) asparagine). Helical transmembrane passes span 266 to 286, 302 to 322, 380 to 400, and 409 to 429; these read FLAG…QPFL, AGAT…GIAI, LQTM…TWLL, and IPSV…AVMA. The ABC transmembrane type-1 1 domain occupies 274–553; that stretch reads LALTGFTFAQ…FVHSAVNLML (280 aa). N-linked (GlcNAc...) asparagine glycosylation occurs at Asn464. The next 2 helical transmembrane spans lie at 487–507 and 533–553; these read CLVF…IIGF and IFAL…NLML. The ABC transporter 1 domain occupies 619–845; it reads IQARDTNIGW…VTAHVHNQTS (227 aa). Position 652 to 659 (652 to 659) interacts with ATP; it reads GPTNSGKS. N-linked (GlcNAc...) asparagine glycosylation is found at Asn694, Asn776, Asn805, and Asn842. Helical transmembrane passes span 898–918, 936–956, 1017–1037, 1121–1141, and 1151–1171; these read AVFL…SIWV, YLLV…GGGS, LFAF…SPFV, LGLV…IVIV, and GFLG…GGFI. The ABC transmembrane type-1 2 domain maps to 898–1179; the sequence is AVFLALCMAL…FIGGWTGLET (282 aa). The ABC transporter 2 domain occupies 1216–1447; it reads IVFDDVTASY…LSSSSPTSSP (232 aa). N-linked (GlcNAc...) asparagine glycosylation is present at Asn1235. 1250-1257 contributes to the ATP binding site; sequence GRTGSGKS.

The protein belongs to the ABC transporter superfamily. ABCC family. Conjugate transporter (TC 3.A.1.208) subfamily.

The protein localises to the cell membrane. ABC-type transporter; part of the gene cluster that mediates the biosynthesis of the antifungal antibiotic FR901469, an inhibitor of beta-1,3-glucansynthase, exerting antifungal activity against the pathogenes Candida albicans and Aspergillus fumigatus. FR901469 is a cyclic depsipeptide containing 12 amino acid residues and a fatty acid chain. Probably involved in the secretion of FR901469. This is ABC-type transporter frbG from Dothideomycetidae sp. (strain 11243) (Fungal sp. (strain No.11243)).